A 796-amino-acid polypeptide reads, in one-letter code: Fibroblast growth factor receptor 3 (796 aa).

The first 19 residues, 1–19, serve as a signal peptide directing secretion; it reads MLVWLCGLCLVTLAGGRSA. At 20–358 the chain is on the extracellular side; that stretch reads ARLPLTEGRP…AEPVPDVDTS (339 aa). The Ig-like C2-type 1 domain occupies 21-119; it reads RLPLTEGRPT…VLRNVTVRVT (99 aa). Residues cysteine 56 and cysteine 102 are joined by a disulfide bond. 2 N-linked (GlcNAc...) asparagine glycosylation sites follow: asparagine 91 and asparagine 113. The segment at 117–142 is disordered; it reads RVTDSPSSGDDEDDDEESESANAPKF. A compositionally biased stretch (acidic residues) spans 125–135; that stretch reads GDDEDDDEESE. Ig-like C2-type domains are found at residues 140-233 and 239-344; these read PKFT…YTLD and PHRP…AWLT. Cysteine 165 and cysteine 217 are disulfide-bonded. 5 N-linked (GlcNAc...) asparagine glycosylation sites follow: asparagine 214, asparagine 251, asparagine 283, asparagine 304, and asparagine 317. A disulfide bond links cysteine 264 and cysteine 328. The helical transmembrane segment at 359–379 threads the bilayer; sequence VSILAAAGCVAVVILVVIIIF. Residues 380-796 lie on the Cytoplasmic side of the membrane; the sequence is TYKMKMPSKK…HQQYNGVIRT (417 aa). In terms of domain architecture, Protein kinase spans 457-746; sequence LTLGKPLGEG…LTVTSTDEYL (290 aa). ATP-binding positions include 463–471 and lysine 493; that span reads LGEGCFGQV. Aspartate 602 acts as the Proton acceptor in catalysis. Residues tyrosine 632, tyrosine 633, tyrosine 709, and tyrosine 745 each carry the phosphotyrosine; by autocatalysis modification.

It belongs to the protein kinase superfamily. Tyr protein kinase family. Fibroblast growth factor receptor subfamily. Monomer. Homodimer after ligand binding. In terms of processing, autophosphorylated. Binding of FGF family members together with heparan sulfate proteoglycan or heparin promotes receptor dimerization and autophosphorylation on tyrosine residues. Autophosphorylation occurs in trans between the two FGFR molecules present in the dimer. Undetectable in the adult skeletal muscle. Low levels of expression were detected in the liver, lung and kidney. Medium levels of expression were detected in the heart, spleen, intestine and eye. Highest expression is observed in the testis.

It is found in the cell membrane. The enzyme catalyses L-tyrosyl-[protein] + ATP = O-phospho-L-tyrosyl-[protein] + ADP + H(+). With respect to regulation, present in an inactive conformation in the absence of bound ligand. Ligand binding leads to dimerization and activation by autophosphorylation on tyrosine residues. Tyrosine-protein kinase that acts as a cell-surface receptor for fibroblast growth factors and plays an essential role in the regulation of cell proliferation, differentiation and apoptosis. Plays an essential role in the regulation of chondrocyte differentiation, proliferation and apoptosis, and is required for normal skeleton development. Regulates both osteogenesis and postnatal bone mineralization by osteoblasts. Promotes apoptosis in chondrocytes, but can also promote cancer cell proliferation. Phosphorylates PLCG1, CBL and FRS2. Ligand binding leads to the activation of several signaling cascades. Activation of PLCG1 leads to the production of the cellular signaling molecules diacylglycerol and inositol 1,4,5-trisphosphate. Phosphorylation of FRS2 triggers recruitment of GRB2, GAB1, PIK3R1 and SOS1, and mediates activation of RAS, MAPK1/ERK2, MAPK3/ERK1 and the MAP kinase signaling pathway, as well as of the AKT1 signaling pathway. The polypeptide is Fibroblast growth factor receptor 3 (FGFR3) (Pleurodeles waltl (Iberian ribbed newt)).